An 802-amino-acid polypeptide reads, in one-letter code: ATP-dependent zinc metalloprotease FTSH 7, chloroplastic (802 aa).

Residues 1–55 (MTTTFEFLQPRIHGFATCCSSNSLLYSKASRFFNDRCRVYRQNPNRFVSNSITLP) constitute a chloroplast transit peptide. The tract at residues 87 to 117 (CQEDDQNESSSEEEESSQSTPAKSERKREKK) is disordered. The span at 88–102 (QEDDQNESSSEEEES) shows a compositional bias: acidic residues. 2 helical membrane-spanning segments follow: residues 134 to 154 (IIQA…MFVM) and 268 to 288 (GGFF…AGLI). 365 to 372 (GLPGTGKT) is an ATP binding site. Residue histidine 590 coordinates Zn(2+). Glutamate 591 is a catalytic residue. Residues histidine 594 and aspartate 673 each coordinate Zn(2+).

It in the N-terminal section; belongs to the AAA ATPase family. This sequence in the C-terminal section; belongs to the peptidase M41 family. It depends on Zn(2+) as a cofactor.

The protein localises to the plastid. It localises to the chloroplast thylakoid membrane. Functionally, probable ATP-dependent zinc metallopeptidase. This Arabidopsis thaliana (Mouse-ear cress) protein is ATP-dependent zinc metalloprotease FTSH 7, chloroplastic (FTSH7).